A 249-amino-acid chain; its full sequence is Probable GDP-mannose transporter 2 (249 aa).

The Lumenal segment spans residues 1–15; it reads MIYTSSKSLQYLAVP. The chain crosses the membrane as a helical span at residues 16–36; sequence IYTIFKNLTIILIAYGEVLFF. The Cytoplasmic segment spans residues 37 to 47; it reads GGKVTSMELTS. Residues 48–68 form a helical membrane-spanning segment; sequence FIMMVLSSVVATWGDQQAIAI. Residues 69–84 lie on the Lumenal side of the membrane; it reads KASSLEDLDQELVEST. Residues 85–105 form a helical membrane-spanning segment; that stretch reads IFVLNPGYLWMFTNCISSALF. Topologically, residues 106 to 122 are cytoplasmic; it reads VLIMRKRIRLTNFKDYD. The chain crosses the membrane as a helical span at residues 123 to 143; sequence TMFYNNVLALPLLLVFSFIME. The Lumenal segment spans residues 144-159; sequence DWSTKNLSVNLSADSL. Residues asparagine 149 and asparagine 153 are each glycosylated (N-linked (GlcNAc...) asparagine). Residues 160–180 form a helical membrane-spanning segment; it reads AAMVISGLMSVGISYCSGWCV. Residues 181–186 are Cytoplasmic-facing; it reads RVTSST. Residues 187–207 traverse the membrane as a helical segment; sequence TYSMVGALNKLPIALAGLVFF. Residues 208–211 lie on the Lumenal side of the membrane; that stretch reads DAPK. The chain crosses the membrane as a helical span at residues 212–232; the sequence is NFLSFFSIFLGFLSGLLYAVA. Residues 233–249 lie on the Cytoplasmic side of the membrane; sequence KQKKIQQQKVLAATLEK.

It belongs to the TPT transporter family. SLC35D subfamily.

The protein resides in the golgi apparatus membrane. It localises to the cytoplasmic vesicle membrane. It is found in the endoplasmic reticulum membrane. In terms of biological role, involved in the import of GDP-mannose from the cytoplasm into the Golgi lumen. The sequence is that of Probable GDP-mannose transporter 2 (HVG1) from Saccharomyces cerevisiae (strain RM11-1a) (Baker's yeast).